The chain runs to 250 residues: Triosephosphate isomerase, cytosolic (250 aa).

Substrate contacts are provided by Asn-1 and Lys-3. Catalysis depends on His-87, which acts as the Electrophile. Glu-160 (proton acceptor) is an active-site residue.

This sequence belongs to the triosephosphate isomerase family. As to quaternary structure, homodimer.

It is found in the cytoplasm. The catalysed reaction is D-glyceraldehyde 3-phosphate = dihydroxyacetone phosphate. The protein operates within carbohydrate biosynthesis; gluconeogenesis. It participates in carbohydrate degradation; glycolysis; D-glyceraldehyde 3-phosphate from glycerone phosphate: step 1/1. In Gracilaria gracilis (Red alga), this protein is Triosephosphate isomerase, cytosolic (TPI1).